The following is a 483-amino-acid chain: Xylulose kinase (483 aa).

Position 79-80 (79-80) interacts with substrate; it reads MH.

This sequence belongs to the FGGY kinase family.

It carries out the reaction D-xylulose + ATP = D-xylulose 5-phosphate + ADP + H(+). In terms of biological role, catalyzes the phosphorylation of D-xylulose to D-xylulose 5-phosphate. This chain is Xylulose kinase, found in Staphylococcus xylosus.